The primary structure comprises 250 residues: 5'-nucleotidase SurE (250 aa).

A divalent metal cation-binding residues include aspartate 8, aspartate 9, serine 40, and asparagine 94.

Belongs to the SurE nucleotidase family. The cofactor is a divalent metal cation.

The protein resides in the cytoplasm. The catalysed reaction is a ribonucleoside 5'-phosphate + H2O = a ribonucleoside + phosphate. Functionally, nucleotidase that shows phosphatase activity on nucleoside 5'-monophosphates. This chain is 5'-nucleotidase SurE, found in Wolbachia sp. subsp. Brugia malayi (strain TRS).